The following is a 250-amino-acid chain: UPF0259 membrane protein PC1_1998 (250 aa).

Helical transmembrane passes span Phe20–Ala40, Phe90–Val110, Leu132–Ile152, Leu156–Phe176, Ala192–Ser212, and Leu222–Phe242.

The protein belongs to the UPF0259 family.

The protein localises to the cell inner membrane. This chain is UPF0259 membrane protein PC1_1998, found in Pectobacterium carotovorum subsp. carotovorum (strain PC1).